The sequence spans 199 residues: Probable GTP-binding protein EngB (199 aa).

The EngB-type G domain occupies 28 to 199; that stretch reads DLPEIALAGR…ESWDTILEYL (172 aa). GTP-binding positions include 36–43, 63–67, 81–84, 148–151, and 180–182; these read GRSNVGKS, GKTQL, DVPG, TKAD, and FSS. Positions 43 and 65 each coordinate Mg(2+).

Belongs to the TRAFAC class TrmE-Era-EngA-EngB-Septin-like GTPase superfamily. EngB GTPase family. The cofactor is Mg(2+).

Functionally, necessary for normal cell division and for the maintenance of normal septation. This Streptococcus equi subsp. zooepidemicus (strain H70) protein is Probable GTP-binding protein EngB.